Consider the following 230-residue polypeptide: Flagellar L-ring protein (230 aa).

A signal peptide spans 1–15 (MSRLPSLSRPCLAIA). C16 is lipidated: N-palmitoyl cysteine. C16 carries S-diacylglycerol cysteine lipidation.

The protein belongs to the FlgH family. The basal body constitutes a major portion of the flagellar organelle and consists of four rings (L,P,S, and M) mounted on a central rod.

The protein localises to the cell outer membrane. It localises to the bacterial flagellum basal body. Functionally, assembles around the rod to form the L-ring and probably protects the motor/basal body from shearing forces during rotation. The sequence is that of Flagellar L-ring protein from Xanthomonas axonopodis pv. citri (strain 306).